A 255-amino-acid polypeptide reads, in one-letter code: Indole-3-glycerol phosphate synthase (255 aa).

It belongs to the TrpC family.

The enzyme catalyses 1-(2-carboxyphenylamino)-1-deoxy-D-ribulose 5-phosphate + H(+) = (1S,2R)-1-C-(indol-3-yl)glycerol 3-phosphate + CO2 + H2O. It functions in the pathway amino-acid biosynthesis; L-tryptophan biosynthesis; L-tryptophan from chorismate: step 4/5. This chain is Indole-3-glycerol phosphate synthase, found in Streptococcus gordonii (strain Challis / ATCC 35105 / BCRC 15272 / CH1 / DL1 / V288).